Reading from the N-terminus, the 278-residue chain is Trans-2,3-dihydro-3-hydroxyanthranilate isomerase (278 aa).

Residue Glu-45 is part of the active site.

The protein belongs to the PhzF family.

The enzyme catalyses (5S,6S)-6-amino-5-hydroxycyclohexa-1,3-diene-1-carboxyate = (1R,6S)-6-amino-5-oxocyclohex-2-ene-1-carboxylate. Its pathway is secondary metabolite biosynthesis; pyocyanine biosynthesis. In terms of biological role, isomerase that catalyzes the condensation of two molecules of trans-2,3-dihydro-3-hydroxyanthranilic acid (DHHA) into the phenazine ring system. The final product is not yet known. This is Trans-2,3-dihydro-3-hydroxyanthranilate isomerase (phzF1) from Pseudomonas aeruginosa (strain ATCC 15692 / DSM 22644 / CIP 104116 / JCM 14847 / LMG 12228 / 1C / PRS 101 / PAO1).